Here is a 121-residue protein sequence, read N- to C-terminus: Large ribosomal subunit protein bL12 (121 aa).

The protein belongs to the bacterial ribosomal protein bL12 family. In terms of assembly, homodimer. Part of the ribosomal stalk of the 50S ribosomal subunit. Forms a multimeric L10(L12)X complex, where L10 forms an elongated spine to which 2 to 4 L12 dimers bind in a sequential fashion. Binds GTP-bound translation factors.

Forms part of the ribosomal stalk which helps the ribosome interact with GTP-bound translation factors. Is thus essential for accurate translation. The sequence is that of Large ribosomal subunit protein bL12 from Streptococcus equi subsp. equi (strain 4047).